Reading from the N-terminus, the 197-residue chain is TATA-box-binding protein (197 aa).

2 tandem repeats follow at residues 10–86 (IENI…VKLL) and 101–177 (IQNI…YNQL).

It belongs to the TBP family.

In terms of biological role, general factor that plays a role in the activation of archaeal genes transcribed by RNA polymerase. Binds specifically to the TATA box promoter element which lies close to the position of transcription initiation. The polypeptide is TATA-box-binding protein (Pyrobaculum neutrophilum (strain DSM 2338 / JCM 9278 / NBRC 100436 / V24Sta) (Thermoproteus neutrophilus)).